Reading from the N-terminus, the 397-residue chain is Elongation factor Tu (397 aa).

The tr-type G domain occupies 10 to 207; the sequence is KPHVNIGTIG…VLDEYVKEPV (198 aa). The G1 stretch occupies residues 19–26; sequence GHIDHGKT. 19-26 lines the GTP pocket; that stretch reads GHIDHGKT. Threonine 26 serves as a coordination point for Mg(2+). Residues 60–64 form a G2 region; it reads GITIS. The segment at 81-84 is G3; the sequence is DCPG. GTP is bound by residues 81–85 and 136–139; these read DCPGH and NKCD. A G4 region spans residues 136–139; that stretch reads NKCD. Residues 174-176 are G5; it reads SAL.

Belongs to the TRAFAC class translation factor GTPase superfamily. Classic translation factor GTPase family. EF-Tu/EF-1A subfamily. As to quaternary structure, monomer.

The protein resides in the cytoplasm. It carries out the reaction GTP + H2O = GDP + phosphate + H(+). Its function is as follows. GTP hydrolase that promotes the GTP-dependent binding of aminoacyl-tRNA to the A-site of ribosomes during protein biosynthesis. The sequence is that of Elongation factor Tu from Desulforapulum autotrophicum (strain ATCC 43914 / DSM 3382 / VKM B-1955 / HRM2) (Desulfobacterium autotrophicum).